A 308-amino-acid chain; its full sequence is D-alanine--D-alanine ligase (308 aa).

The 200-residue stretch at 103–302 folds into the ATP-grasp domain; sequence KFVFRAAGLP…YGELVSWMVE (200 aa). 130 to 184 serves as a coordination point for ATP; it reads MDPPYVIKPVSEGSSVGVFIVRAGDNRPPAELTSAEWNLGDEVMAERYIAGRELT. Asp252, Glu269, and Asn271 together coordinate Mg(2+).

The protein belongs to the D-alanine--D-alanine ligase family. The cofactor is Mg(2+). It depends on Mn(2+) as a cofactor.

The protein localises to the cytoplasm. The enzyme catalyses 2 D-alanine + ATP = D-alanyl-D-alanine + ADP + phosphate + H(+). Its pathway is cell wall biogenesis; peptidoglycan biosynthesis. Its function is as follows. Cell wall formation. This Parvibaculum lavamentivorans (strain DS-1 / DSM 13023 / NCIMB 13966) protein is D-alanine--D-alanine ligase.